The following is a 154-amino-acid chain: 6,7-dimethyl-8-ribityllumazine synthase (154 aa).

Residues F22, 56–58 (AFE), and 80–82 (AVI) contribute to the 5-amino-6-(D-ribitylamino)uracil site. (2S)-2-hydroxy-3-oxobutyl phosphate is bound at residue 85-86 (AT). H88 functions as the Proton donor in the catalytic mechanism. Residue F113 participates in 5-amino-6-(D-ribitylamino)uracil binding. R127 contacts (2S)-2-hydroxy-3-oxobutyl phosphate.

The protein belongs to the DMRL synthase family.

It carries out the reaction (2S)-2-hydroxy-3-oxobutyl phosphate + 5-amino-6-(D-ribitylamino)uracil = 6,7-dimethyl-8-(1-D-ribityl)lumazine + phosphate + 2 H2O + H(+). The protein operates within cofactor biosynthesis; riboflavin biosynthesis; riboflavin from 2-hydroxy-3-oxobutyl phosphate and 5-amino-6-(D-ribitylamino)uracil: step 1/2. In terms of biological role, catalyzes the formation of 6,7-dimethyl-8-ribityllumazine by condensation of 5-amino-6-(D-ribitylamino)uracil with 3,4-dihydroxy-2-butanone 4-phosphate. This is the penultimate step in the biosynthesis of riboflavin. The polypeptide is 6,7-dimethyl-8-ribityllumazine synthase (Clostridium botulinum (strain Okra / Type B1)).